The following is a 33-amino-acid chain: Photosystem II reaction center protein Psb30 (33 aa).

A helical membrane pass occupies residues leucine 5–leucine 25.

This sequence belongs to the Psb30/Ycf12 family. As to quaternary structure, PSII is composed of 1 copy each of membrane proteins PsbA, PsbB, PsbC, PsbD, PsbE, PsbF, PsbH, PsbI, PsbJ, PsbK, PsbL, PsbM, PsbT, PsbY, PsbZ, Psb30/Ycf12, peripheral proteins of the oxygen-evolving complex and a large number of cofactors. It forms dimeric complexes.

The protein localises to the plastid. It localises to the chloroplast thylakoid membrane. Functionally, a core subunit of photosystem II (PSII), probably helps stabilize the reaction center. The sequence is that of Photosystem II reaction center protein Psb30 from Euglena stellata.